Here is a 434-residue protein sequence, read N- to C-terminus: Trigger factor (434 aa).

The PPIase FKBP-type domain maps to 160-245; it reads DDKVKMNFIG…LTEVQAANLP (86 aa).

The protein belongs to the FKBP-type PPIase family. Tig subfamily.

It is found in the cytoplasm. The catalysed reaction is [protein]-peptidylproline (omega=180) = [protein]-peptidylproline (omega=0). Its function is as follows. Involved in protein export. Acts as a chaperone by maintaining the newly synthesized protein in an open conformation. Functions as a peptidyl-prolyl cis-trans isomerase. In Shewanella frigidimarina (strain NCIMB 400), this protein is Trigger factor.